The chain runs to 121 residues: Large ribosomal subunit protein uL22 (121 aa).

The protein belongs to the universal ribosomal protein uL22 family. In terms of assembly, part of the 50S ribosomal subunit.

This protein binds specifically to 23S rRNA; its binding is stimulated by other ribosomal proteins, e.g. L4, L17, and L20. It is important during the early stages of 50S assembly. It makes multiple contacts with different domains of the 23S rRNA in the assembled 50S subunit and ribosome. In terms of biological role, the globular domain of the protein is located near the polypeptide exit tunnel on the outside of the subunit, while an extended beta-hairpin is found that lines the wall of the exit tunnel in the center of the 70S ribosome. The polypeptide is Large ribosomal subunit protein uL22 (Hydrogenobaculum sp. (strain Y04AAS1)).